A 285-amino-acid chain; its full sequence is mRNA decay factor CTH2 (285 aa).

Residues 37 to 55 (INIRELEEYYNKTILNEDN) form a required for mRNA decay activity region. The disordered stretch occupies residues 132–164 (LQQLSQQKPKNDASFSSEKESSAQPKVKSQVQE). Over residues 153-164 (SAQPKVKSQVQE) the composition is skewed to polar residues. 2 C3H1-type zinc fingers span residues 169-197 (LYKT…HGLG) and 207-235 (NFRT…HGDD). Residues 252 to 271 (STSKQSDEKRSNGRGSAKKK) are disordered.

Interacts with DHH1.

The protein resides in the nucleus. It is found in the cytoplasm. It localises to the P-body. Functionally, binds to specific AU-rich elements (ARE) in the 3'-untranslated region of target mRNAs and promotes their degradation. In response to iron deficiency, promotes the decay of many mRNAs encoding proteins involved in iron-dependent pathways. Recruits the DHH1 helicase to the SDH4 mRNA and promotes SDH4 mRNA decay. Also destabilizes target mRNA by modulating 3'-end processing, creating extended transcripts that are prone for degradation. This is mRNA decay factor CTH2 (TIS11) from Saccharomyces cerevisiae (strain ATCC 204508 / S288c) (Baker's yeast).